We begin with the raw amino-acid sequence, 185 residues long: Potassium-transporting ATPase KdpC subunit (185 aa).

Residues 14–34 form a helical membrane-spanning segment; sequence ALSLLTGVAYPLALTGIAAVI.

This sequence belongs to the KdpC family. The system is composed of three essential subunits: KdpA, KdpB and KdpC.

The protein localises to the cell inner membrane. Functionally, part of the high-affinity ATP-driven potassium transport (or Kdp) system, which catalyzes the hydrolysis of ATP coupled with the electrogenic transport of potassium into the cytoplasm. This subunit acts as a catalytic chaperone that increases the ATP-binding affinity of the ATP-hydrolyzing subunit KdpB by the formation of a transient KdpB/KdpC/ATP ternary complex. This is Potassium-transporting ATPase KdpC subunit from Cereibacter sphaeroides (strain ATCC 17023 / DSM 158 / JCM 6121 / CCUG 31486 / LMG 2827 / NBRC 12203 / NCIMB 8253 / ATH 2.4.1.) (Rhodobacter sphaeroides).